The primary structure comprises 125 residues: Histone H1-like protein HC1 (125 aa).

Belongs to the histone H1/H5 family. HCT subfamily.

Its function is as follows. Might have a role analogous to that of eukaryotic histone proteins. The chain is Histone H1-like protein HC1 (hctA) from Chlamydia muridarum (strain MoPn / Nigg).